Consider the following 92-residue polypeptide: Small ribosomal subunit protein uS19 (92 aa).

Belongs to the universal ribosomal protein uS19 family.

In terms of biological role, protein S19 forms a complex with S13 that binds strongly to the 16S ribosomal RNA. In Francisella philomiragia subsp. philomiragia (strain ATCC 25017 / CCUG 19701 / FSC 153 / O#319-036), this protein is Small ribosomal subunit protein uS19.